The primary structure comprises 287 residues: Cell wall-binding protein YocH (287 aa).

An N-terminal signal peptide occupies residues 1 to 25 (MKKTIMSFVAVAALSTTAFGAHASA). 2 consecutive LysM domains span residues 26–69 (KEIT…KLTI) and 78–121 (GQYT…TLSV). The segment covering 130 to 143 (TATENAQTNAPQAA) has biased composition (low complexity). The interval 130 to 193 (TATENAQTNA…SNTNNQEASK (64 aa)) is disordered. Over residues 165–181 (QETKAEAETSVNTEEKA) the composition is skewed to basic and acidic residues. The span at 182-193 (VQSNTNNQEASK) shows a compositional bias: polar residues.

The protein localises to the secreted. The protein resides in the cell wall. The sequence is that of Cell wall-binding protein YocH (yocH) from Bacillus subtilis (strain 168).